We begin with the raw amino-acid sequence, 505 residues long: Putative thymidine phosphorylase (505 aa).

It belongs to the thymidine/pyrimidine-nucleoside phosphorylase family. Type 2 subfamily.

The catalysed reaction is thymidine + phosphate = 2-deoxy-alpha-D-ribose 1-phosphate + thymine. The polypeptide is Putative thymidine phosphorylase (Parvibaculum lavamentivorans (strain DS-1 / DSM 13023 / NCIMB 13966)).